A 213-amino-acid chain; its full sequence is Nucleolar protein 12 (213 aa).

A coiled-coil region spans residues 33-96; that stretch reads GFHKRKVERK…RLVTAKTESV (64 aa). A disordered region spans residues 118–213; that stretch reads ARLLGLTPPE…LTGKARHSGE (96 aa). 2 stretches are compositionally biased toward basic residues: residues 170–182 and 198–213; these read AHSR…KHPR and KAQR…HSGE.

It belongs to the RRP17 family. As to quaternary structure, interacts with KIAA1191.

The protein resides in the nucleus. It localises to the nucleolus. It is found in the cytoplasm. Multifunctional RNA binding protein that plays a role in RNA metabolism and DNA maintenance. Participates in the resolution of DNA stress and the maintenance of genome integrity by localizing to sites of DNA insults. Also plays a role in proper nucleolar organization by limiting nucleolar size and regulating nucleolar number. Mechanistically, regulates the nucleolar levels of fibrillarin and nucleolin, two key players in pre-rRNA processing and ribosome assembly. The sequence is that of Nucleolar protein 12 (NOL12) from Homo sapiens (Human).